A 624-amino-acid polypeptide reads, in one-letter code: Elongation factor 4 (624 aa).

Positions 17–203 (ALIRNFCIIA…RVVRDVPAPV (187 aa)) constitute a tr-type G domain. GTP is bound by residues 29-34 (DHGKST) and 150-153 (NKID).

It belongs to the TRAFAC class translation factor GTPase superfamily. Classic translation factor GTPase family. LepA subfamily.

The protein localises to the cell membrane. The catalysed reaction is GTP + H2O = GDP + phosphate + H(+). In terms of biological role, required for accurate and efficient protein synthesis under certain stress conditions. May act as a fidelity factor of the translation reaction, by catalyzing a one-codon backward translocation of tRNAs on improperly translocated ribosomes. Back-translocation proceeds from a post-translocation (POST) complex to a pre-translocation (PRE) complex, thus giving elongation factor G a second chance to translocate the tRNAs correctly. Binds to ribosomes in a GTP-dependent manner. This Streptomyces griseus subsp. griseus (strain JCM 4626 / CBS 651.72 / NBRC 13350 / KCC S-0626 / ISP 5235) protein is Elongation factor 4.